A 179-amino-acid polypeptide reads, in one-letter code: tRNA-splicing endonuclease (179 aa).

Active-site residues include Tyr-115, His-125, and Lys-156.

It belongs to the tRNA-intron endonuclease family. Archaeal short subfamily. Homotetramer; although the tetramer contains four active sites, only two participate in the cleavage. Therefore, it should be considered as a dimer of dimers.

The enzyme catalyses pretRNA = a 3'-half-tRNA molecule with a 5'-OH end + a 5'-half-tRNA molecule with a 2',3'-cyclic phosphate end + an intron with a 2',3'-cyclic phosphate and a 5'-hydroxyl terminus.. In terms of biological role, endonuclease that removes tRNA introns. Cleaves pre-tRNA at the 5'- and 3'-splice sites to release the intron. The products are an intron and two tRNA half-molecules bearing 2',3' cyclic phosphate and 5'-OH termini. Recognizes a pseudosymmetric substrate in which 2 bulged loops of 3 bases are separated by a stem of 4 bp. The polypeptide is tRNA-splicing endonuclease (endA) (Methanocaldococcus jannaschii (strain ATCC 43067 / DSM 2661 / JAL-1 / JCM 10045 / NBRC 100440) (Methanococcus jannaschii)).